The chain runs to 407 residues: uncharacterized protein (407 aa).

A Glycyl lysine isopeptide (Lys-Gly) (interchain with G-Cter in ubiquitin) cross-link involves residue Lys22.

Belongs to the SVF1 family.

Its subcellular location is the cytoplasm. This is an uncharacterized protein from Saccharomyces cerevisiae (strain ATCC 204508 / S288c) (Baker's yeast).